A 349-amino-acid polypeptide reads, in one-letter code: Secretory carrier-associated membrane protein 3 (349 aa).

Positions 1 to 90 are disordered; the sequence is MAQSRDTGNP…EPRNYGSYST (90 aa). Residues 1–168 lie on the Cytoplasmic side of the membrane; sequence MAQSRDTGNP…PQEFQKTVST (168 aa). Residue serine 32 is modified to Phosphoserine. Threonine 37 carries the post-translational modification Phosphothreonine. Residues tyrosine 41 and tyrosine 53 each carry the phosphotyrosine modification. Positions 49–68 are enriched in pro residues; that stretch reads PPPAYEPPAPAPAPLPPPSA. 2 positions are modified to phosphoserine: serine 74 and serine 78. Phosphotyrosine is present on tyrosine 85. Residue serine 87 is modified to Phosphoserine. A run of 4 helical transmembrane segments spans residues 169–189, 200–220, 236–256, and 277–297; these read MYYLWMCSTLALLLNFFACLA, GFGLSMLWLLLFTPCSFVCWY, FVFFFIFFVQDVFFVLQAIGI, and VAVLMLLVALLFTGIAVLGIV. Residues 298–349 are Cytoplasmic-facing; it reads MLKRIHSLYRQTGASFQKAQQEFAAGVFSNPAVRTAAANAAAGAAENAFRAP. Lysine 315 is covalently cross-linked (Glycyl lysine isopeptide (Lys-Gly) (interchain with G-Cter in SUMO1)).

The protein belongs to the SCAMP family. As to quaternary structure, interacts with NEDD4 and NEDD4L and TSG101. Interacts with RNF126. In terms of processing, monoubiquitinated.

The protein resides in the membrane. Functions in post-Golgi recycling pathways. Acts as a recycling carrier to the cell surface. The protein is Secretory carrier-associated membrane protein 3 (Scamp3) of Mus musculus (Mouse).